A 477-amino-acid polypeptide reads, in one-letter code: Probable F-box protein At5g25300 (477 aa).

Positions 346–377 form a coiled coil; sequence VDMNKEDSQIEINEKETKINQEHDQSDETQAK. Positions 412–458 constitute an F-box domain; sequence SPPWSELPGDILRSVFERLSFVDFQRAKQTCPIKRSKSNCLRLWLIT.

The protein is Probable F-box protein At5g25300 of Arabidopsis thaliana (Mouse-ear cress).